An 87-amino-acid polypeptide reads, in one-letter code: U3-theraphotoxin-Hhn1a 12 (87 aa).

The signal sequence occupies residues Met-1 to Ala-24. Residues Ser-25–Arg-52 constitute a propeptide that is removed on maturation. 3 cysteine pairs are disulfide-bonded: Cys-54/Cys-67, Cys-61/Cys-72, and Cys-66/Cys-79.

This sequence belongs to the neurotoxin 10 (Hwtx-1) family. 51 (Hntx-8) subfamily. Hntx-8 sub-subfamily. In terms of tissue distribution, expressed by the venom gland.

Its subcellular location is the secreted. In terms of biological role, ion channel inhibitor. This is U3-theraphotoxin-Hhn1a 12 from Cyriopagopus hainanus (Chinese bird spider).